A 206-amino-acid chain; its full sequence is Small ribosomal subunit protein uS4 (206 aa).

One can recognise an S4 RNA-binding domain in the interval 96–156; it reads GRLDNVVYRM…EKAKQQARIK (61 aa).

Belongs to the universal ribosomal protein uS4 family. As to quaternary structure, part of the 30S ribosomal subunit. Contacts protein S5. The interaction surface between S4 and S5 is involved in control of translational fidelity.

One of the primary rRNA binding proteins, it binds directly to 16S rRNA where it nucleates assembly of the body of the 30S subunit. In terms of biological role, with S5 and S12 plays an important role in translational accuracy. The protein is Small ribosomal subunit protein uS4 of Vibrio campbellii (strain ATCC BAA-1116).